Reading from the N-terminus, the 52-residue chain is Large ribosomal subunit protein bL32c (52 aa).

The protein belongs to the bacterial ribosomal protein bL32 family.

The protein resides in the plastid. It localises to the chloroplast. This is Large ribosomal subunit protein bL32c from Eucalyptus globulus subsp. globulus (Tasmanian blue gum).